The following is a 930-amino-acid chain: Protein translocase subunit SecA (930 aa).

ATP contacts are provided by residues Gln-87, 105 to 109, and Asp-515; that span reads GEGKT. Positions 914, 916, 925, and 926 each coordinate Zn(2+).

It belongs to the SecA family. Monomer and homodimer. Part of the essential Sec protein translocation apparatus which comprises SecA, SecYEG and auxiliary proteins SecDF-YajC and YidC. Requires Zn(2+) as cofactor.

It localises to the cell inner membrane. Its subcellular location is the cytoplasm. It catalyses the reaction ATP + H2O + cellular proteinSide 1 = ADP + phosphate + cellular proteinSide 2.. Its function is as follows. Part of the Sec protein translocase complex. Interacts with the SecYEG preprotein conducting channel. Has a central role in coupling the hydrolysis of ATP to the transfer of proteins into and across the cell membrane, serving both as a receptor for the preprotein-SecB complex and as an ATP-driven molecular motor driving the stepwise translocation of polypeptide chains across the membrane. The protein is Protein translocase subunit SecA of Cupriavidus metallidurans (strain ATCC 43123 / DSM 2839 / NBRC 102507 / CH34) (Ralstonia metallidurans).